We begin with the raw amino-acid sequence, 414 residues long: Patatin-like protein 1 (414 aa).

The region spanning 22 to 228 (LSLDGGGVRG…TANNPTLVAM (207 aa)) is the PNPLA domain. Positions 26–31 (GGGVRG) match the GXGXXG motif. The GXSXG signature appears at 64–68 (GTSTG). Residue Ser-66 is the Nucleophile of the active site. Residue Asp-215 is the Proton acceptor of the active site. The DGA/G motif lies at 215–217 (DGA). Ser-399 carries the phosphoserine modification.

This sequence belongs to the patatin family. Post-translationally, phosphorylated at Ser-399 by CPK3. Phosphorylation enhances PLP1 activity towards phosphatidylcholine. Expressed specifically in roots and root hairs.

The protein resides in the cytoplasm. Its function is as follows. Possesses non-specific lipolytic acyl hydrolase (LAH) activity. Catalyzes the hydrolysis of the neutral lipids monogalactosyldiacylglycerol (MGDG), digalactosyldiacylglycerol (DGDG) and phosphatidylglycerol (PG), and less efficiently the polar lipids phosphatidylcholine (PC) and phosphatidylinositol (PI), but not the storage lipid triacylglycerol (TAG). May play a role in root development. The polypeptide is Patatin-like protein 1 (PLP1) (Arabidopsis thaliana (Mouse-ear cress)).